The chain runs to 929 residues: Isoleucine--tRNA ligase (929 aa).

Residues 57–67 (PYANGNIHVGH) carry the 'HIGH' region motif. L-isoleucyl-5'-AMP is bound at residue Glu554. A 'KMSKS' region motif is present at residues 595–599 (KMSKS). Lys598 is an ATP binding site. Cys888, Cys891, Cys908, and Cys911 together coordinate Zn(2+).

Belongs to the class-I aminoacyl-tRNA synthetase family. IleS type 1 subfamily. As to quaternary structure, monomer. Requires Zn(2+) as cofactor.

It is found in the cytoplasm. It carries out the reaction tRNA(Ile) + L-isoleucine + ATP = L-isoleucyl-tRNA(Ile) + AMP + diphosphate. Functionally, catalyzes the attachment of isoleucine to tRNA(Ile). As IleRS can inadvertently accommodate and process structurally similar amino acids such as valine, to avoid such errors it has two additional distinct tRNA(Ile)-dependent editing activities. One activity is designated as 'pretransfer' editing and involves the hydrolysis of activated Val-AMP. The other activity is designated 'posttransfer' editing and involves deacylation of mischarged Val-tRNA(Ile). The chain is Isoleucine--tRNA ligase from Streptococcus thermophilus (strain ATCC BAA-491 / LMD-9).